The chain runs to 476 residues: Nyctalopin (476 aa).

The first 18 residues, 1-18 (MLILLLHAVVFSLPYTRA), serve as a signal peptide directing secretion. Residues 19–57 (TEACLRACPAACTCSHVERGCSVRCDRAGLQRVPQEFPC) form the LRRNT domain. LRR repeat units lie at residues 58 to 79 (EAAS…AFGT), 82 to 103 (SLRR…AFKG), 106 to 128 (RLAE…TFAA), 131 to 154 (RLRR…AELP), 155 to 177 (ALRE…RGLA), 178 to 199 (NLTH…SLLG), 202 to 223 (RLRS…AFGD), 226 to 247 (ALED…AFRG), 250 to 271 (RLRT…WFSD), 274 to 295 (ELEL…AFQN), and 298 to 319 (GLLA…AFQP). Asn-92 carries an N-linked (GlcNAc...) asparagine glycan. Asn-178 carries an N-linked (GlcNAc...) asparagine glycan. An N-linked (GlcNAc...) asparagine glycan is attached at Asn-295. The LRRCT domain occupies 331–383 (NPWRCDCQLEWLRDWMEGSGRVADVACASPGSVAGQDLSQVVFERSSDGLCVD). 4 N-linked (GlcNAc...) asparagine glycosylation sites follow: Asn-388, Asn-427, Asn-434, and Asn-438.

Belongs to the small leucine-rich proteoglycan (SLRP) family. SLRP class IV subfamily. As to expression, expressed abundantly in retina with lower levels in brain, lung, spleen and testis. Not detected in kidney, heart or liver. In the retina, highest expression found in the inner nuclear layer and ganglion cell layer.

Its subcellular location is the secreted. The protein localises to the extracellular space. It localises to the extracellular matrix. In Mus musculus (Mouse), this protein is Nyctalopin (Nyx).